Reading from the N-terminus, the 837-residue chain is Putative dimethyl sulfoxide reductase catalytic subunit A (837 aa).

The segment at residues 1 to 36 (MSDTDLNATRRDVLKSGAVAAVGLSGGGLLSTLQEA) is a signal peptide (tat-type signal). Residues 53–110 (DQVVKTACSPNCRGKCPLDVFVRDGQIKKVEQQVPAAKTFKRGCTLGMTHLQRVYNAD) enclose the 4Fe-4S Mo/W bis-MGD-type domain. 4 residues coordinate [4Fe-4S] cluster: Cys-60, Cys-64, Cys-68, and Cys-96. Residue Asn-200 participates in Mo-bis(molybdopterin guanine dinucleotide) binding. The interval 813-837 (EHQSNEYTQHNPRGSSGTATDGDSS) is disordered. Over residues 826-837 (GSSGTATDGDSS) the composition is skewed to low complexity.

The protein belongs to the prokaryotic molybdopterin-containing oxidoreductase family. In terms of assembly, probable multiprotein complex that likely consists of DmsA, DmsB and DmsC. The cofactor is Mo-bis(molybdopterin guanine dinucleotide). It depends on [4Fe-4S] cluster as a cofactor. In terms of processing, predicted to be exported by the Tat system. The position of the signal peptide cleavage has not been experimentally proven.

The protein resides in the cell membrane. The catalysed reaction is dimethyl sulfide + a menaquinone + H2O = dimethyl sulfoxide + a menaquinol. In terms of biological role, dimethyl sulfoxide (DMSO) reductase catalyzes the reduction of dimethyl sulfoxide (DMSO) to dimethyl sulfide (DMS) during anaerobic respiration; it can also use trimethylamine N-oxide (TMAO) as terminal electron acceptor. Required for anaerobic respiration on DMSO and TMAO; subunit A is proposed to be catalytically active. The protein is Putative dimethyl sulfoxide reductase catalytic subunit A (dmsA) of Halobacterium salinarum (strain ATCC 700922 / JCM 11081 / NRC-1) (Halobacterium halobium).